The following is a 367-amino-acid chain: Methionine aminopeptidase 1 (367 aa).

The C6H2-type zinc-finger motif lies at 3–57; sequence GILCASPGCGKPAKLQCPTCVNLKLETPSHFCSQECFKTFWPLHKMYHQKGQPEN. The Zn(2+) site is built by Cys6, Cys11, Cys19, Cys22, Cys34, Cys38, His46, and His50. His185 is a binding site for a protein. Zn(2+) is bound by residues Asp202, Asp213, and His276. His283 is an a protein binding site. Residues Glu309 and Glu340 each contribute to the Zn(2+) site.

This sequence belongs to the peptidase M24A family. Methionine aminopeptidase type 1 subfamily. In terms of assembly, associates with the 60S ribosomal subunit of the 80S translational complex. Zn(2+) serves as cofactor. Co(2+) is required as a cofactor. Requires Mn(2+) as cofactor. The cofactor is Fe(2+).

Its subcellular location is the cytoplasm. The enzyme catalyses Release of N-terminal amino acids, preferentially methionine, from peptides and arylamides.. Functionally, cotranslationally removes the N-terminal methionine from nascent proteins. The N-terminal methionine is often cleaved when the second residue in the primary sequence is small and uncharged (Met-Ala-, Cys, Gly, Pro, Ser, Thr, or Val). The polypeptide is Methionine aminopeptidase 1 (metap1) (Dictyostelium discoideum (Social amoeba)).